We begin with the raw amino-acid sequence, 56 residues long: Large ribosomal subunit protein bL33c (56 aa).

The protein belongs to the bacterial ribosomal protein bL33 family.

It is found in the plastid. The protein localises to the chloroplast. The protein is Large ribosomal subunit protein bL33c (rpl33) of Guillardia theta (Cryptophyte).